Consider the following 586-residue polypeptide: Kelch-like protein 7 (586 aa).

Positions 44–111 constitute a BTB domain; that stretch reads CDVILMVQER…AYTARISVNS (68 aa). Positions 146–248 constitute a BACK domain; it reads CLGISVLAEC…SKNFLSKTVQ (103 aa). Kelch repeat units follow at residues 294 to 336, 337 to 382, 383 to 430, 431 to 481, 483 to 528, and 530 to 575; these read RIAL…FWDN, VVYI…AAEG, KIYT…EANG, LIYV…FVKD, IFAV…AVGS, and VYVL…CVVD.

Homodimer. Component of the BCR(KLHL7) E3 ubiquitin ligase complex, at least composed of CUL3 and KLHL7 and RBX1. As to expression, widely expressed, with highest levels in adult and fetal heart, CNS and adult testis.

It is found in the nucleus. Its subcellular location is the cytoplasm. It participates in protein modification; protein ubiquitination. Substrate-specific adapter of a BCR (BTB-CUL3-RBX1) E3 ubiquitin ligase complex. The BCR(KLHL7) complex acts by mediating ubiquitination and subsequent degradation of substrate proteins. Probably mediates 'Lys-48'-linked ubiquitination. In Homo sapiens (Human), this protein is Kelch-like protein 7 (KLHL7).